A 580-amino-acid chain; its full sequence is MKVVLVSGGVISGVGKGIIASSAGLLLKTLGLRVTAIKTDPYINTDAGLLNPLEHGECFVLDDGGETDLDLGNYERYLGIQLSRDSNITTGKIYKQVIEKERRGDYLGKTVQVVPHITDAIQDWIERVAKIPVDASGEAPDVCIIELGGTIGDLESGPFVEALSQLRHRLGRDNFLSISVSYVPIINGEEKTKPTQHAIRQVRSAGLIPDVIACRCERELDQATITKIARSCQVEDEQVIGVRNMDTIYQVPLLLEQEGLLKLLQKGLALDKCQVTPPMAQKGQALWDLWKKTVVPDRHLEPVNIILVGKYVSLDDSYLSVHKALEHSAMRCNRKLNLVSVDSEHLEPEMQEKDPRKFHEAWAHVVRAQGIIVPGGFGTRGIQGMVDVAKWARERKLPYLGICLGMQTAVIEYARNVMGLKGATSEEFSATAEHRVVIFMPEGSKEQMGGTMRLGSRTSHFKPGTEWSKLRGLYGGVDVVEERHRHRYEVNPDYIEDLEKAGLSLTSMDDQGVRVETIELKDHPFFVGLQAHPEYKSKTLAPAPSLLGLVAASSGCLDEIIEAAHKKQSSSNGVSDVTNF.

One can recognise a Glutamine amidotransferase type-1 domain in the interval 304 to 559 (NIILVGKYVS…VAASSGCLDE (256 aa)). Residues Cys-403, His-532, and Glu-534 each act as for GATase activity in the active site.

This sequence belongs to the CTP synthase family.

It catalyses the reaction UTP + L-glutamine + ATP + H2O = CTP + L-glutamate + ADP + phosphate + 2 H(+). It functions in the pathway pyrimidine metabolism; CTP biosynthesis via de novo pathway; CTP from UDP: step 2/2. Its function is as follows. Catalyzes the ATP-dependent amination of UTP to CTP with either L-glutamine or ammonia as the source of nitrogen. The chain is CTP synthase (URA7) from Gibberella zeae (strain ATCC MYA-4620 / CBS 123657 / FGSC 9075 / NRRL 31084 / PH-1) (Wheat head blight fungus).